Here is a 228-residue protein sequence, read N- to C-terminus: Phosphoglycolate phosphatase (228 aa).

D12 acts as the Nucleophile in catalysis. Residues D12, D14, and D177 each contribute to the Mg(2+) site.

This sequence belongs to the HAD-like hydrolase superfamily. CbbY/CbbZ/Gph/YieH family. Mg(2+) serves as cofactor.

It catalyses the reaction 2-phosphoglycolate + H2O = glycolate + phosphate. Its pathway is organic acid metabolism; glycolate biosynthesis; glycolate from 2-phosphoglycolate: step 1/1. Functionally, specifically catalyzes the dephosphorylation of 2-phosphoglycolate. Is involved in the dissimilation of the intracellular 2-phosphoglycolate formed during the DNA repair of 3'-phosphoglycolate ends, a major class of DNA lesions induced by oxidative stress. The sequence is that of Phosphoglycolate phosphatase from Vibrio vulnificus (strain CMCP6).